Here is a 355-residue protein sequence, read N- to C-terminus: uncharacterized protein (355 aa).

A J domain is found at 9-75 (DYYDILNISV…KLREKYDKLG (67 aa)).

The protein belongs to the DnaJ family.

The protein localises to the cytoplasm. This is an uncharacterized protein from Schizosaccharomyces pombe (strain 972 / ATCC 24843) (Fission yeast).